The primary structure comprises 321 residues: Putrescine export system permease protein SapB (321 aa).

Residues 1–8 (MIIFTLRR) are Cytoplasmic-facing. A helical transmembrane segment spans residues 9–29 (ILLLIVTLFLLTFVGFSLSYF). Over 30-80 (TPHAPLQGASLWNAWVFWFNGLIHWDFGVSSINGQPIAEQLKEVFPATMEL) the chain is Periplasmic. Residues 74-302 (FPATMELCIL…SLVIIVNVIS (229 aa)) enclose the ABC transmembrane type-1 domain. Residues 81 to 101 (CILAFGFALIVGIPVGMIAGI) traverse the membrane as a helical segment. Residues 102-112 (TRHKWQDNLIN) are Cytoplasmic-facing. Residues 113 to 133 (AIALLGFSIPVFWLALLLTLF) form a helical membrane-spanning segment. Over 134–174 (CSLTLGWLPVSGRFDLLYEVKPITGFALIDAWLSDSPWRDE) the chain is Periplasmic. The chain crosses the membrane as a helical span at residues 175-195 (MIMSAIRHMILPVITLSVAPT). Topologically, residues 196–248 (TEVIRLMRISTIEVYDQNYVKAAATRGLSRFTILRRHVLHNALPPVIPRLGLQ) are cytoplasmic. Residues 249–269 (FSTMLTLAMITEMVFSWPGLG) traverse the membrane as a helical segment. The Periplasmic segment spans residues 270–280 (RWLINAIRQQD). Residues 281–301 (YAAISAGVMVCGSLVIIVNVI) form a helical membrane-spanning segment. Residues 302-321 (SDILGAMANPLKHKEWYALR) lie on the Cytoplasmic side of the membrane.

The protein belongs to the binding-protein-dependent transport system permease family. OppBC subfamily.

It is found in the cell inner membrane. Its function is as follows. Part of a putrescine export transport system, does not play a role in resistance to antimicrobial peptides. This is Putrescine export system permease protein SapB (sapB) from Escherichia coli (strain K12).